Consider the following 345-residue polypeptide: tRNA N6-adenosine threonylcarbamoyltransferase (345 aa).

Residues His117 and His121 each coordinate Fe cation. Substrate-binding positions include 140–144, Asp173, Gly186, and Asn279; that span reads LVSGG. Fe cation is bound at residue Asp307.

The protein belongs to the KAE1 / TsaD family. Fe(2+) is required as a cofactor.

It is found in the cytoplasm. It carries out the reaction L-threonylcarbamoyladenylate + adenosine(37) in tRNA = N(6)-L-threonylcarbamoyladenosine(37) in tRNA + AMP + H(+). Required for the formation of a threonylcarbamoyl group on adenosine at position 37 (t(6)A37) in tRNAs that read codons beginning with adenine. Is involved in the transfer of the threonylcarbamoyl moiety of threonylcarbamoyl-AMP (TC-AMP) to the N6 group of A37, together with TsaE and TsaB. TsaD likely plays a direct catalytic role in this reaction. The protein is tRNA N6-adenosine threonylcarbamoyltransferase of Verminephrobacter eiseniae (strain EF01-2).